The primary structure comprises 205 residues: Anaerobic dimethyl sulfoxide reductase chain B (205 aa).

4Fe-4S ferredoxin-type domains lie at 5 to 33 (YGFFIDSSRCTGCKTCELACKDYKDLTPE), 59 to 89 (FAYYLSISCNHCEDPACTKVCPSGAMHKRED), and 90 to 119 (GFVVVDEDVCIGCRYCHMACPYGAPQYNET). [4Fe-4S] cluster is bound by residues Cys14, Cys17, Cys20, Cys24, Cys67, Cys70, Cys75, Cys79, Cys99, Cys102, Cys105, Cys109, Cys126, Cys129, Cys141, and Cys145. Positions 184–205 (KPNANSRPTGDTTGYLANPKEV) are disordered. Positions 186 to 195 (NANSRPTGDT) are enriched in polar residues.

As to quaternary structure, heterotrimeric enzyme composed of a catalytic heterodimer (DmsAB) and a membrane anchor protein (DmsC). [4Fe-4S] cluster serves as cofactor.

Its function is as follows. Electron transfer subunit of the terminal reductase during anaerobic growth on various sulfoxide and N-oxide compounds. This is Anaerobic dimethyl sulfoxide reductase chain B (dmsB) from Escherichia coli (strain K12).